Here is a 428-residue protein sequence, read N- to C-terminus: Enolase (428 aa).

Q163 is a binding site for (2R)-2-phosphoglycerate. The active-site Proton donor is the E205. D242, E283, and D310 together coordinate Mg(2+). (2R)-2-phosphoglycerate-binding residues include K335, R364, S365, and K386. Residue K335 is the Proton acceptor of the active site.

The protein belongs to the enolase family. Requires Mg(2+) as cofactor.

It is found in the cytoplasm. The protein resides in the secreted. It localises to the cell surface. The enzyme catalyses (2R)-2-phosphoglycerate = phosphoenolpyruvate + H2O. It functions in the pathway carbohydrate degradation; glycolysis; pyruvate from D-glyceraldehyde 3-phosphate: step 4/5. Functionally, catalyzes the reversible conversion of 2-phosphoglycerate (2-PG) into phosphoenolpyruvate (PEP). It is essential for the degradation of carbohydrates via glycolysis. This is Enolase from Streptomyces avermitilis (strain ATCC 31267 / DSM 46492 / JCM 5070 / NBRC 14893 / NCIMB 12804 / NRRL 8165 / MA-4680).